Here is a 93-residue protein sequence, read N- to C-terminus: Small ribosomal subunit protein uS19 (93 aa).

Belongs to the universal ribosomal protein uS19 family.

In terms of biological role, protein S19 forms a complex with S13 that binds strongly to the 16S ribosomal RNA. The protein is Small ribosomal subunit protein uS19 of Cutibacterium acnes (strain DSM 16379 / KPA171202) (Propionibacterium acnes).